The sequence spans 324 residues: Putative glycosyltransferase R655 (324 aa).

Belongs to the glycosyltransferase 25 family.

This is Putative glycosyltransferase R655 from Acanthamoeba polyphaga (Amoeba).